The primary structure comprises 170 residues: Adenine phosphoribosyltransferase (170 aa).

It belongs to the purine/pyrimidine phosphoribosyltransferase family. As to quaternary structure, homodimer.

The protein resides in the cytoplasm. The enzyme catalyses AMP + diphosphate = 5-phospho-alpha-D-ribose 1-diphosphate + adenine. It participates in purine metabolism; AMP biosynthesis via salvage pathway; AMP from adenine: step 1/1. Functionally, catalyzes a salvage reaction resulting in the formation of AMP, that is energically less costly than de novo synthesis. This is Adenine phosphoribosyltransferase from Halothermothrix orenii (strain H 168 / OCM 544 / DSM 9562).